A 792-amino-acid chain; its full sequence is MNKKVYKTLEYNKILTMLSSYAACDETKKRCLSLEPITDLYEIRHLQTTTADALSRLYKDSGVSFVGIHNVHASLKRLDIGGALNTTELLRICSLLEVAKRVKAYGRSAMDNEKQDSLSGLFAGIEPVSALCDEIKRCILSEEEIADDASPELFKIRKSIRGMNDRIHAQLTKLMNNSTTRTYLQDAVVTMRDGRYCLPVKAEAKGNVPGMMHDQSSTGSTLFIEPMAVVNLNNELKELFIKEQEEIEKILAALSDKVAMNAAALEQDYEILSELDFIFAKANLAKSYNGVAPDFNTDGHINIRKGRHPLLDAKKVVPIDVRLGEDYKQLIITGPNTGGKTVSLKTVGLLTLMGQAGLHIPAADRSKLAIFEDVFADIGDEQSIEQSLSTFSSHMTNIVKILEKADDRSLCLFDELCSGTDPTEGAALAISILNRLHQYGAITMATTHYSELKVYALSTDGVENACCEFNVETLSPTYRLLIGIPGKSNAFAISSKLGLDENIIEDAKSRINDNDLDFEDLIASLESQRQTIEKEQLEINSYKAEIEKLKKQLEEKNERIDKSKDKILREANEEAYKILQDAKELADKTIRNFNKYGQGQAPMSQMEKERSALRDKMNDKEKKLSDIKKNTAKANHKAPKKLRIGDSVLVLSLNLKGTVHTLPNAKGDLYVQMGILRSLVNINDLVLLNDDVSPAKKYGGSGSKIKMSKSLSVSSEINLIGKTTDEALALLDKYLDDAYIAHLSSVRIVHGKGTGALRKAVHGLLKRTKTIAEYHLGEFGEGDAGVTIATFK.

Residue 334–341 (GPNTGGKT) participates in ATP binding. Positions 717 to 792 (INLIGKTTDE…DAGVTIATFK (76 aa)) constitute a Smr domain.

Belongs to the DNA mismatch repair MutS family. MutS2 subfamily. Homodimer. Binds to stalled ribosomes, contacting rRNA.

Its function is as follows. Endonuclease that is involved in the suppression of homologous recombination and thus may have a key role in the control of bacterial genetic diversity. In terms of biological role, acts as a ribosome collision sensor, splitting the ribosome into its 2 subunits. Detects stalled/collided 70S ribosomes which it binds and splits by an ATP-hydrolysis driven conformational change. Acts upstream of the ribosome quality control system (RQC), a ribosome-associated complex that mediates the extraction of incompletely synthesized nascent chains from stalled ribosomes and their subsequent degradation. Probably generates substrates for RQC. The chain is Endonuclease MutS2 from Agathobacter rectalis (strain ATCC 33656 / DSM 3377 / JCM 17463 / KCTC 5835 / VPI 0990) (Eubacterium rectale).